Reading from the N-terminus, the 305-residue chain is ATP synthase F(0) complex subunit B2, mitochondrial (305 aa).

The N-terminal 22 residues, 1–22, are a transit peptide targeting the mitochondrion; that stretch reads MSLSRCLPLGQNARVIIIPARL.

It belongs to the eukaryotic ATPase B chain family. As to quaternary structure, subunit of the F-type ATPase which has 2 components, CF(1) - the catalytic core - and CF(0) - the membrane proton channel.

The protein resides in the mitochondrion. Its subcellular location is the mitochondrion inner membrane. Its function is as follows. Mitochondrial membrane ATP synthase (F(1)F(0) ATP synthase or Complex V) produces ATP from ADP in the presence of a proton gradient across the membrane which is generated by electron transport complexes of the respiratory chain. F-type ATPases consist of two structural domains, F(1) - containing the extramembraneous catalytic core, and F(0) - containing the membrane proton channel, linked together by a central stalk and a peripheral stalk. During catalysis, ATP synthesis in the catalytic domain of F(1) is coupled via a rotary mechanism of the central stalk subunits to proton translocation. Part of the complex F(0) domain and the peripheric stalk, which acts as a stator to hold the subunits of the catalytic subcomplexes relative to the rotary elements. Plays a role in somatic development. Does not play a role in germline development. This Caenorhabditis elegans protein is ATP synthase F(0) complex subunit B2, mitochondrial.